We begin with the raw amino-acid sequence, 320 residues long: Glutaminase (320 aa).

S70, N121, E165, N172, Y196, Y248, and V266 together coordinate substrate.

The protein belongs to the glutaminase family. In terms of assembly, homotetramer.

The enzyme catalyses L-glutamine + H2O = L-glutamate + NH4(+). The chain is Glutaminase from Mycobacterium marinum (strain ATCC BAA-535 / M).